Reading from the N-terminus, the 201-residue chain is Large ribosomal subunit protein bL25 (201 aa).

The protein belongs to the bacterial ribosomal protein bL25 family. CTC subfamily. Part of the 50S ribosomal subunit; part of the 5S rRNA/L5/L18/L25 subcomplex. Contacts the 5S rRNA. Binds to the 5S rRNA independently of L5 and L18.

Functionally, this is one of the proteins that binds to the 5S RNA in the ribosome where it forms part of the central protuberance. This is Large ribosomal subunit protein bL25 from Ectopseudomonas mendocina (strain ymp) (Pseudomonas mendocina).